The primary structure comprises 111 residues: Histone H2A-Bbd type 1 (111 aa).

The protein belongs to the histone H2A family. As to quaternary structure, the nucleosome is a histone octamer containing two molecules each of H2A, H2B, H3 and H4 assembled in one H3-H4 heterotetramer and two H2A-H2B heterodimers. Incorporated into nucleosomes during late spermatogenesis. Interacts with H2BC1/TH2B; preferentially dimerizes with H2BC1/TH2B to form nucleosomes. In terms of tissue distribution, highly expressed in adult testis, mainly in spermatocytes.

The protein localises to the nucleus. It localises to the chromosome. In terms of biological role, atypical histone H2A which replaces conventional H2A during late spermatogenesis and is involved in the replacement of histones to protamine in male germ cells. Core component of nucleosome: nucleosomes wrap and compact DNA into chromatin, limiting DNA accessibility to the cellular machineries which require DNA as a template. Nucleosomes containing H2AB1 only wrap 130 bp of DNA, compared to 147 bp for classical nucleosomes. In condensing spermatids, the heterodimer between H2AB1 and H2BC1/TH2B is loaded onto the nucleosomes and promotes loading of transition proteins (TNP1 and TNP2) onto the nucleosomes. Inclusion of the H2AB1-H2BC1/TH2B dimer into chromatin opens the nucleosomes, releasing the nucleosomal DNA ends and allowing the invasion of nucleosomes by transition proteins (TNP1 and TNP2). Then, transition proteins drive the recruitment and processing of protamines, which are responsible for histone eviction. In Mus musculus (Mouse), this protein is Histone H2A-Bbd type 1 (H2ab1).